The primary structure comprises 421 residues: Synaptotagmin-1 (421 aa).

At 1-57 (MVSASRPEALAAPVTTVATLVPHNATEPASPGEGKEDAFSKLKQKFMNELHKIPLPP) the chain is on the vesicular side. An N-linked (GlcNAc...) asparagine glycan is attached at N24. A helical transmembrane segment spans residues 58 to 79 (WALIAIAIVAVLLVVTCCFCVC). 5 S-palmitoyl cysteine lipidation sites follow: C74, C75, C77, C79, and C82. The Cytoplasmic portion of the chain corresponds to 80-421 (KKCLFKKKNK…EVDAMLAVKK (342 aa)). Residues 112–141 (TMKDQALKDDDAETGLTDGEEKEEPKEEEK) are disordered. Over residues 121 to 133 (DDAETGLTDGEEK) the composition is skewed to acidic residues. T128 bears the Phosphothreonine mark. A phospholipid binding region spans residues 135-381 (EPKEEEKLGK…AIGKVFVGYN (247 aa)). In terms of domain architecture, C2 1 spans 141 to 260 (KLGKLQYSLD…DFGHVTEEWR (120 aa)). Ca(2+) contacts are provided by L171, D172, and D178. Phosphotyrosine is present on Y229. The Ca(2+) site is built by D230, F231, D232, S235, K236, and D238. A Phosphoserine modification is found at S264. Residues 272 to 405 (KLGDICFSLR…NPRRPIAQWH (134 aa)) enclose the C2 2 domain. Ca(2+)-binding residues include D303 and D309. 2 positions are modified to phosphoserine: S342 and S344. Ca(2+) is bound by residues D363, D365, and D371.

Belongs to the synaptotagmin family. Homotetramer. Heterodimer; heterodimerizes with SYT2 in presence of calcium. Interacts with SCAMP5. Interacts with STON2. Forms a complex with SV2B, syntaxin 1 and SNAP25. Interacts with SV2A, SV2B and SV2C. Interacts with RIMS1. Interacts with PRRT2. Interacts with DNAJC5 in a phosphorylation-dependent manner. Interacts (via N-terminus) with RAB3A. Interacts with SYT12. Interacts with calmodulin. Interacts with DNM1 (via C-terminal proline-rich domain (PRD)); this interaction facilitates vesicle fission during clathrin-mediated endocytosis (CME). The cofactor is Ca(2+). Post-translationally, glycosylated. Expressed in the brain and adrenal medulla (at protein level).

The protein localises to the cytoplasmic vesicle. It is found in the secretory vesicle membrane. The protein resides in the secretory vesicle. It localises to the synaptic vesicle membrane. Its subcellular location is the chromaffin granule membrane. The protein localises to the cytoplasm. Functionally, calcium sensor that participates in triggering neurotransmitter release at the synapse. May have a regulatory role in the membrane interactions during trafficking of synaptic vesicles at the active zone of the synapse. It binds acidic phospholipids with a specificity that requires the presence of both an acidic head group and a diacyl backbone. A Ca(2+)-dependent interaction between synaptotagmin and putative receptors for activated protein kinase C has also been reported. It can bind to at least three additional proteins in a Ca(2+)-independent manner; these are neurexins, syntaxin and AP2. Plays a role in dendrite formation by melanocytes. This chain is Synaptotagmin-1, found in Mus musculus (Mouse).